Consider the following 138-residue polypeptide: Acidic phospholipase A2 2 (138 aa).

The first 16 residues, 1–16 (MRTLWIVAVLLLGVEG), serve as a signal peptide directing secretion. Cystine bridges form between C42–C131, C44–C60, C59–C111, C65–C138, C66–C104, C73–C97, and C91–C102. 3 residues coordinate Ca(2+): Y43, G45, and G47. Residue H63 is part of the active site. D64 contacts Ca(2+). The active site involves D105.

It belongs to the phospholipase A2 family. Group II subfamily. D49 sub-subfamily. It depends on Ca(2+) as a cofactor. In terms of tissue distribution, expressed by the venom gland.

It localises to the secreted. The enzyme catalyses a 1,2-diacyl-sn-glycero-3-phosphocholine + H2O = a 1-acyl-sn-glycero-3-phosphocholine + a fatty acid + H(+). In terms of biological role, snake venom phospholipase A2 (PLA2) that displays edema-inducing activities, exhibits indirect hemolytic activity, and inhibits ADP-induced platelet aggregation. PLA2 catalyzes the calcium-dependent hydrolysis of the 2-acyl groups in 3-sn-phosphoglycerides. This is Acidic phospholipase A2 2 from Protobothrops mucrosquamatus (Taiwan habu).